Here is a 73-residue protein sequence, read N- to C-terminus: Translation initiation factor IF-1 (73 aa).

In terms of domain architecture, S1-like spans 1-72; that stretch reads MAKDEIIEFE…SKGRITYRGK (72 aa).

Belongs to the IF-1 family. As to quaternary structure, component of the 30S ribosomal translation pre-initiation complex which assembles on the 30S ribosome in the order IF-2 and IF-3, IF-1 and N-formylmethionyl-tRNA(fMet); mRNA recruitment can occur at any time during PIC assembly.

It is found in the cytoplasm. Functionally, one of the essential components for the initiation of protein synthesis. Stabilizes the binding of IF-2 and IF-3 on the 30S subunit to which N-formylmethionyl-tRNA(fMet) subsequently binds. Helps modulate mRNA selection, yielding the 30S pre-initiation complex (PIC). Upon addition of the 50S ribosomal subunit IF-1, IF-2 and IF-3 are released leaving the mature 70S translation initiation complex. The chain is Translation initiation factor IF-1 from Psychrobacter arcticus (strain DSM 17307 / VKM B-2377 / 273-4).